A 156-amino-acid chain; its full sequence is Small ribosomal subunit protein uS7 (156 aa).

This sequence belongs to the universal ribosomal protein uS7 family. Part of the 30S ribosomal subunit. Contacts proteins S9 and S11.

One of the primary rRNA binding proteins, it binds directly to 16S rRNA where it nucleates assembly of the head domain of the 30S subunit. Is located at the subunit interface close to the decoding center, probably blocks exit of the E-site tRNA. The sequence is that of Small ribosomal subunit protein uS7 from Brachyspira hyodysenteriae (strain ATCC 49526 / WA1).